Consider the following 341-residue polypeptide: Ribosomal RNA small subunit methyltransferase C (341 aa).

It belongs to the methyltransferase superfamily. RsmC family. In terms of assembly, monomer.

Its subcellular location is the cytoplasm. It catalyses the reaction guanosine(1207) in 16S rRNA + S-adenosyl-L-methionine = N(2)-methylguanosine(1207) in 16S rRNA + S-adenosyl-L-homocysteine + H(+). Its function is as follows. Specifically methylates the guanine in position 1207 of 16S rRNA in the 30S particle. The protein is Ribosomal RNA small subunit methyltransferase C of Shewanella halifaxensis (strain HAW-EB4).